Reading from the N-terminus, the 172-residue chain is Large ribosomal subunit protein uL11m (172 aa).

Belongs to the universal ribosomal protein uL11 family.

The protein localises to the mitochondrion. The sequence is that of Large ribosomal subunit protein uL11m (mrpl11) from Dictyostelium discoideum (Social amoeba).